The primary structure comprises 95 residues: RING finger protein Z (95 aa).

The N-myristoyl glycine; by host moiety is linked to residue Gly-2. The RING-type; atypical zinc finger occupies 38–74; sequence CKRCWFATKGLIACSDHYLCLNCLTIMLSDGNFCEVC. Positions 88-91 match the PTAP/PSAP motif motif; it reads PSAP.

This sequence belongs to the arenaviridae Z protein family. As to quaternary structure, interacts with protein NP; this interaction probably directs the encapsidated genome to budding sites. Interacts (via RING domain) with polymerase L; this interaction inhibits viral transcription and replication, Z partially blocks the product exit tunnel for the releasing nascent RNA product. Interacts with the glycoprotein complex; this interaction plays a role in virion budding. Interacts with host eIF4E; this interaction results in eIF4E reduced affinity for its substrate, the 5'-m7 G cap structure. Interacts (via late-budding domain) with host TSG101; this interaction is essential for budding and release of viral particles. Interacts with host RPLP0; this interaction may serve to load ribosome-like particles inside the virion. Interacts with host PML; this interaction induces PML bodies redistribution in the cytoplasm upon viral infection. In terms of processing, myristoylation is required for the role of RING finger protein Z in assembly and budding.

The protein resides in the virion. The protein localises to the host cytoplasm. Its subcellular location is the host perinuclear region. It localises to the host cell membrane. Plays a crucial role in virion assembly and budding. Expressed late in the virus life cycle, it acts as an inhibitor of viral transcription and RNA synthesis by interacting with the viral polymerase L. Presumably recruits the NP encapsidated genome to cellular membranes at budding sites via direct interaction with NP. Plays critical roles in the final steps of viral release by interacting with host TSG101, a member of the vacuolar protein-sorting pathway and using other cellular host proteins involved in vesicle formation pathway. The budding of the virus progeny occurs after association of protein Z with the viral glycoprotein complex SSP-GP1-GP2 at the cell periphery, step that requires myristoylation of protein Z. Also selectively represses protein production by associating with host eIF4E. In cell-based minigenome assay, has an inhibitory effect on the ribonucleoprotein machinery (vRNP), which is responsible for the replication and transcription of the viral genome. The protein is RING finger protein Z of Sooretamys angouya (Paraguayan rice rat).